Here is a 323-residue protein sequence, read N- to C-terminus: tRNA U34 carboxymethyltransferase (323 aa).

Carboxy-S-adenosyl-L-methionine-binding positions include Lys91, Trp105, Lys110, Gly130, 152–154 (DPT), 181–182 (IE), Met196, Tyr200, and Arg315.

Belongs to the class I-like SAM-binding methyltransferase superfamily. CmoB family. As to quaternary structure, homotetramer.

It catalyses the reaction carboxy-S-adenosyl-L-methionine + 5-hydroxyuridine(34) in tRNA = 5-carboxymethoxyuridine(34) in tRNA + S-adenosyl-L-homocysteine + H(+). Functionally, catalyzes carboxymethyl transfer from carboxy-S-adenosyl-L-methionine (Cx-SAM) to 5-hydroxyuridine (ho5U) to form 5-carboxymethoxyuridine (cmo5U) at position 34 in tRNAs. This is tRNA U34 carboxymethyltransferase from Salmonella agona (strain SL483).